Reading from the N-terminus, the 319-residue chain is Putative G-protein coupled receptor B0244.7 (319 aa).

The N-linked (GlcNAc...) asparagine glycan is linked to Asn28. The next 6 membrane-spanning stretches (helical) occupy residues Ala49–Phe69, Leu107–Phe127, Ser131–Val151, Val166–Val186, Gly206–Ile226, and Leu261–Ile281.

It belongs to the G-protein coupled receptor 1 family. B0244 subfamily.

It localises to the cell membrane. This is Putative G-protein coupled receptor B0244.7 from Caenorhabditis elegans.